Here is a 234-residue protein sequence, read N- to C-terminus: MKVIRVKNQEEGGQVAFSLLKESLAHGAKTLGLATGSTPLTFYKEIVKSDLSFSDVTSINLDEYVGLPVEHDQSYDYFMRENLFNHKPFKENYLPNGLAKDLSVEVSRYDNLIAEHPIDFQILGIGRNGHIGFNEPGTPFDIRTHVVDLEESTIEANSRFFASKEDVPKQAVSMGIASIMESKMIVLMAFGKEKAYAVKEMITGPITESLPASVLQNHDNVIVIVDEEAASELD.

Catalysis depends on D62, which acts as the Proton acceptor; for enolization step. The active-site For ring-opening step is the N128. The Proton acceptor; for ring-opening step role is filled by H130. Catalysis depends on E135, which acts as the For ring-opening step.

The protein belongs to the glucosamine/galactosamine-6-phosphate isomerase family. NagB subfamily.

The enzyme catalyses alpha-D-glucosamine 6-phosphate + H2O = beta-D-fructose 6-phosphate + NH4(+). Its pathway is amino-sugar metabolism; N-acetylneuraminate degradation; D-fructose 6-phosphate from N-acetylneuraminate: step 5/5. Functionally, catalyzes the reversible isomerization-deamination of glucosamine 6-phosphate (GlcN6P) to form fructose 6-phosphate (Fru6P) and ammonium ion. In Streptococcus uberis (strain ATCC BAA-854 / 0140J), this protein is Glucosamine-6-phosphate deaminase.